Reading from the N-terminus, the 269-residue chain is uncharacterized protein (269 aa).

The next 8 helical transmembrane spans lie at tyrosine 9–phenylalanine 29, phenylalanine 50–leucine 70, phenylalanine 82–phenylalanine 102, leucine 107–glutamine 127, leucine 147–threonine 167, valine 173–phenylalanine 193, leucine 200–alanine 220, and isoleucine 224–proline 244.

Its subcellular location is the membrane. This is an uncharacterized protein from Schizosaccharomyces pombe (strain 972 / ATCC 24843) (Fission yeast).